Here is a 932-residue protein sequence, read N- to C-terminus: Phosphoenolpyruvate carboxylase (932 aa).

Catalysis depends on residues H164 and K594.

It belongs to the PEPCase type 1 family. Mg(2+) serves as cofactor.

It catalyses the reaction oxaloacetate + phosphate = phosphoenolpyruvate + hydrogencarbonate. Functionally, forms oxaloacetate, a four-carbon dicarboxylic acid source for the tricarboxylic acid cycle. The sequence is that of Phosphoenolpyruvate carboxylase from Bradyrhizobium diazoefficiens (strain JCM 10833 / BCRC 13528 / IAM 13628 / NBRC 14792 / USDA 110).